A 312-amino-acid chain; its full sequence is Protein atonal (312 aa).

Disordered regions lie at residues 136–174 (SNVG…TAAA) and 220–248 (NDGS…GKQI). A compositionally biased stretch (low complexity) spans 162–174 (PSTTATSTPTAAA). Positions 255-307 (KRRLAANARERRRMQNLNQAFDRLRQYLPCLGNDRQLSKHETLQMAQTYISAL) constitute a bHLH domain.

In terms of assembly, efficient DNA binding requires dimerization with another bHLH protein. Forms a heterodimer with Daughterless. In terms of tissue distribution, proneural clusters and sense organ precursors of the chordotonal organs, optic furrow of the eye-antennal disk and developing brain lobe.

The protein resides in the nucleus. Functionally, developmental protein involved in neurogenesis. Required for the formation of chordotonal organs and photoreceptors. Seems to bind to E boxes. Specifically required for the photoreceptor R8 selection. The polypeptide is Protein atonal (ato) (Drosophila melanogaster (Fruit fly)).